Consider the following 141-residue polypeptide: General odorant-binding protein 57b (141 aa).

Positions 1–22 are cleaved as a signal peptide; that stretch reads MFIYRLVFIAPLILLLFSLAKA. Cystine bridges form between cysteine 39-cysteine 77, cysteine 73-cysteine 120, and cysteine 111-cysteine 129.

Belongs to the PBP/GOBP family.

Its function is as follows. Present in the aqueous fluid surrounding olfactory sensory dendrites and are thought to aid in the capture and transport of hydrophobic odorants into and through this fluid. The chain is General odorant-binding protein 57b from Drosophila melanogaster (Fruit fly).